A 946-amino-acid chain; its full sequence is Nonribosomal peptide synthetase pngA (946 aa).

An adenylation (A) domain region spans residues 32–450 (AIASREPTRY…AGREKDSIIV (419 aa)). The 80-residue stretch at 580–659 (QPRSGLEQSL…TLSDALKQHA (80 aa)) folds into the Carrier domain. Residue serine 618 is modified to O-(pantetheine 4'-phosphoryl)serine. Residues 681–933 (PIWLVHPVGG…ILDAENIFSF (253 aa)) form a thioesterase (TE) domain region.

The protein belongs to the NRP synthetase family.

It catalyses the reaction 2 3-phenylpyruvate + H(+) = phenguignardate + H2O. Nonribosomal peptide synthetase that mediates the biosynthesis of phenguignardic acid. PngA alone is sufficient for phenguignardic acid synthesis. PngA first activates phenylpyruvic acid (PPA) through its A domain to AMP-PPA. The PPA unit is then loaded to the T domain and eventually transferred to the TE domain. Another PPA unit is then loaded onto the T domain. The TE domain likely promotes the enolate formation on the attached unit, followed by a nucleophilic attack on the carbonyl to yield an ether linkage between the two units. Finally, the TE domain probably catalyzes a similar reaction to give the cyclized dioxolanone core and releases phenguignardic acid. The protein is Nonribosomal peptide synthetase pngA of Aspergillus terreus (strain NIH 2624 / FGSC A1156).